Reading from the N-terminus, the 192-residue chain is Casparian strip membrane protein 1 (192 aa).

The Cytoplasmic segment spans residues 1-30 (MSTTVDVPESSNVAKGKAIAVARPGGWKKG). Residues 31–51 (LAIMDFILRLGGIAASLGAAA) form a helical membrane-spanning segment. The Extracellular portion of the chain corresponds to 52–80 (TMGTSDQTLPFFTQFFQFEASYDSFTTFQ). The helical transmembrane segment at 81-101 (FFVITMALVAGYLVLSLPFSV) threads the bilayer. Residues 102–113 (VAIIRPHAPGPR) lie on the Cytoplasmic side of the membrane. Residues 114–134 (LFLIILDTVFLTLATASGASA) form a helical membrane-spanning segment. Topologically, residues 135–166 (AAIVYLAHNGNQDSNWLAICNQFGDFCAQTSG) are extracellular. A helical transmembrane segment spans residues 167–187 (AVVASFVAVVILVLLVIMSAL). The Cytoplasmic segment spans residues 188 to 192 (ALRRH).

This sequence belongs to the Casparian strip membrane proteins (CASP) family. As to quaternary structure, homodimer and heterodimers.

The protein localises to the cell membrane. Its function is as follows. Regulates membrane-cell wall junctions and localized cell wall deposition. Required for establishment of the Casparian strip membrane domain (CSD) and the subsequent formation of Casparian strips, a cell wall modification of the root endodermis that determines an apoplastic barrier between the intraorganismal apoplasm and the extraorganismal apoplasm and prevents lateral diffusion. This Vigna unguiculata (Cowpea) protein is Casparian strip membrane protein 1.